Reading from the N-terminus, the 578-residue chain is Frizzled and smoothened-like protein Q (578 aa).

The N-terminal stretch at 1–23 (MKNSFLINILIIYYLFIILFVNS) is a signal peptide. Residues 24 to 233 (QDLKLGGSCE…GKTKILDRTN (210 aa)) are Extracellular-facing. Residues 27–157 (KLGGSCELID…GAPMFPINST (131 aa)) form the FZ domain. Disulfide bonds link C32–C95, C41–C88, C79–C128, and C121–C141. 4 N-linked (GlcNAc...) asparagine glycosylation sites follow: N46, N64, N99, and N104. Residues N144, N155, N181, and N233 are each glycosylated (N-linked (GlcNAc...) asparagine). A helical membrane pass occupies residues 234–254 (YTLTSISFITCIFMILTFGVL). Residues 255-261 (PNKITHR) are Cytoplasmic-facing. A helical transmembrane segment spans residues 262-282 (MESILSFACGGCITALSLFIQ). The Extracellular segment spans residues 283 to 305 (SRQDNFNCSSDPGRFKSQSDYLC). N-linked (GlcNAc...) asparagine glycosylation occurs at N289. Residues 306–326 (LLTGLIFQFGAITSIFWSPMI) traverse the membrane as a helical segment. Residues 327–341 (AYDFYITSTLGKIRK) lie on the Cytoplasmic side of the membrane. A helical transmembrane segment spans residues 342–362 (FGLYRIVLWSFIFVLTALPAF). At 363–388 (GGKYSATVATNCWINSDDGSAWQYVS) the chain is on the extracellular side. Residues 389 to 409 (FYIPSWCAMGLICLFSILSVI) traverse the membrane as a helical segment. The Cytoplasmic segment spans residues 410–422 (NVSKMYIQTPNNR). The chain crosses the membrane as a helical span at residues 423–443 (ILFFNIKILITLLLFLFVLTF). Over 444–490 (ASSLKFYMEERMDTYFDAIAVWVECIGKGDPSQCELHAPGYDLKALN) the chain is Extracellular. Residues 491-511 (IVVIGILGFTVFIGYGLDPIV) traverse the membrane as a helical segment. The Cytoplasmic portion of the chain corresponds to 512–578 (IHIWMESKKF…LKSTEINQQP (67 aa)). Positions 544–556 (NNNNNETASTSSG) are enriched in low complexity. Positions 544–578 (NNNNNETASTSSGNERKQTTVKMSNLKSTEINQQP) are disordered. Polar residues predominate over residues 563–578 (TVKMSNLKSTEINQQP).

This sequence belongs to the G-protein coupled receptor Fz/Smo family.

The protein resides in the membrane. The sequence is that of Frizzled and smoothened-like protein Q (fslQ) from Dictyostelium discoideum (Social amoeba).